The following is a 187-amino-acid chain: Large ribosomal subunit protein uL5 (187 aa).

Belongs to the universal ribosomal protein uL5 family. In terms of assembly, part of the 50S ribosomal subunit; part of the 5S rRNA/L5/L18/L25 subcomplex. Contacts the 5S rRNA and the P site tRNA. Forms a bridge to the 30S subunit in the 70S ribosome.

This is one of the proteins that bind and probably mediate the attachment of the 5S RNA into the large ribosomal subunit, where it forms part of the central protuberance. In the 70S ribosome it contacts protein S13 of the 30S subunit (bridge B1b), connecting the 2 subunits; this bridge is implicated in subunit movement. Contacts the P site tRNA; the 5S rRNA and some of its associated proteins might help stabilize positioning of ribosome-bound tRNAs. This Roseobacter denitrificans (strain ATCC 33942 / OCh 114) (Erythrobacter sp. (strain OCh 114)) protein is Large ribosomal subunit protein uL5.